The sequence spans 59 residues: UPF0181 protein YoaH (59 aa).

Belongs to the UPF0181 family.

The chain is UPF0181 protein YoaH from Salmonella arizonae (strain ATCC BAA-731 / CDC346-86 / RSK2980).